The chain runs to 135 residues: Endoribonuclease YbeY (135 aa).

Zn(2+)-binding residues include His102, His106, and His112.

This sequence belongs to the endoribonuclease YbeY family. Requires Zn(2+) as cofactor.

The protein localises to the cytoplasm. Single strand-specific metallo-endoribonuclease involved in late-stage 70S ribosome quality control and in maturation of the 3' terminus of the 16S rRNA. The polypeptide is Endoribonuclease YbeY (Rubrobacter xylanophilus (strain DSM 9941 / JCM 11954 / NBRC 16129 / PRD-1)).